The following is a 459-amino-acid chain: D(1)-like dopamine receptor (459 aa).

Residues 1-23 (MAQNFSTVGDGKQMLLERDSSKR) are Extracellular-facing. Residue N4 is glycosylated (N-linked (GlcNAc...) asparagine). Residues 24 to 49 (VLTGCFLSLLIFTTLLGNTLVCVAVT) form a helical membrane-spanning segment. Residues 50–60 (KFRHLRSKVTN) lie on the Cytoplasmic side of the membrane. Residues 61–87 (FFVISLAISDLLVAILVMPWKAATEIM) traverse the membrane as a helical segment. The Extracellular portion of the chain corresponds to 88-96 (GFWPFGEFC). C96 and C187 are disulfide-bonded. The helical transmembrane segment at 97–119 (NIWVAFDIMCSTASILNLCVISV) threads the bilayer. Residues 120–138 (DRYWAISSPFRYERKMTPK) are Cytoplasmic-facing. Residues 139-164 (VACLMISVAWTLSVLISFIPVQLNWH) form a helical membrane-spanning segment. At 165 to 191 (KAQTASYVELNGTYAGDLPPDNCDSSL) the chain is on the extracellular side. Residues 192-216 (NRTYAISSSLISFYIPVAIMIVTYT) traverse the membrane as a helical segment. Residues 217 to 269 (RIYRIAQKQIRRISALERAAESAQNRHSSMGNSLSMESECSFKMSFKRETKVL) lie on the Cytoplasmic side of the membrane. The helical transmembrane segment at 270-297 (KTLSVIMGVFVCCWLPFFILNCMVPFCE) threads the bilayer. The Extracellular segment spans residues 298 to 311 (ADDTTDFPCISSTT). The chain crosses the membrane as a helical span at residues 312–333 (FDVFVWFGWANSSLNPIIYAFN). At 334 to 459 (ADFRKAFSIL…QNGQHKSMSC (126 aa)) the chain is on the cytoplasmic side.

It belongs to the G-protein coupled receptor 1 family.

Its subcellular location is the cell membrane. The protein resides in the cell projection. The protein localises to the cilium membrane. Functionally, receptor for dopamine. In Takifugu rubripes (Japanese pufferfish), this protein is D(1)-like dopamine receptor (d14).